The primary structure comprises 268 residues: 4-hydroxy-tetrahydrodipicolinate reductase (268 aa).

NAD(+)-binding positions include 10–15 (GSTGRM), Glu-36, 99–101 (GTT), and 123–126 (APNM). The active-site Proton donor/acceptor is His-156. His-157 is a (S)-2,3,4,5-tetrahydrodipicolinate binding site. Lys-160 (proton donor) is an active-site residue. 166–167 (GT) contacts (S)-2,3,4,5-tetrahydrodipicolinate.

The protein belongs to the DapB family.

It is found in the cytoplasm. The enzyme catalyses (S)-2,3,4,5-tetrahydrodipicolinate + NAD(+) + H2O = (2S,4S)-4-hydroxy-2,3,4,5-tetrahydrodipicolinate + NADH + H(+). It catalyses the reaction (S)-2,3,4,5-tetrahydrodipicolinate + NADP(+) + H2O = (2S,4S)-4-hydroxy-2,3,4,5-tetrahydrodipicolinate + NADPH + H(+). The protein operates within amino-acid biosynthesis; L-lysine biosynthesis via DAP pathway; (S)-tetrahydrodipicolinate from L-aspartate: step 4/4. In terms of biological role, catalyzes the conversion of 4-hydroxy-tetrahydrodipicolinate (HTPA) to tetrahydrodipicolinate. The polypeptide is 4-hydroxy-tetrahydrodipicolinate reductase (Nitrosomonas europaea (strain ATCC 19718 / CIP 103999 / KCTC 2705 / NBRC 14298)).